Here is a 203-residue protein sequence, read N- to C-terminus: GTP-binding protein yptV1 (203 aa).

GTP is bound by residues 15–23 (GDSGVGKSC), 33–40 (YTESYIST), 63–67 (DTAGQ), 121–124 (NKSD), and 151–153 (SAK). The Effector region motif lies at 37–45 (YISTIGVDF). Positions 173-203 (MASQPVPPKPGGPVVRPTEGKPINNKSSSCC) are disordered. S-geranylgeranyl cysteine attachment occurs at residues C202 and C203.

This sequence belongs to the small GTPase superfamily. Rab family.

The protein resides in the cell membrane. Its function is as follows. Protein transport. Probably involved in vesicular traffic. This chain is GTP-binding protein yptV1 (YPTV1), found in Volvox carteri (Green alga).